A 507-amino-acid chain; its full sequence is ATP synthase subunit alpha, chloroplastic (507 aa).

Residue 170–177 (GDRQTGKT) coordinates ATP.

This sequence belongs to the ATPase alpha/beta chains family. In terms of assembly, F-type ATPases have 2 components, CF(1) - the catalytic core - and CF(0) - the membrane proton channel. CF(1) has five subunits: alpha(3), beta(3), gamma(1), delta(1), epsilon(1). CF(0) has four main subunits: a, b, b' and c.

The protein resides in the plastid. It is found in the chloroplast thylakoid membrane. It catalyses the reaction ATP + H2O + 4 H(+)(in) = ADP + phosphate + 5 H(+)(out). Functionally, produces ATP from ADP in the presence of a proton gradient across the membrane. The alpha chain is a regulatory subunit. The polypeptide is ATP synthase subunit alpha, chloroplastic (Nymphaea alba (White water-lily)).